Here is a 91-residue protein sequence, read N- to C-terminus: Conotoxin VnMKLT1-021 (91 aa).

The N-terminal stretch at 1–22 (MKLTCVMIVAVLFLTAWTFVTA) is a signal peptide. The propeptide occupies 23–57 (DDPRDGPDTAVGWRKLFSEARDEMKNREASKLNER). 3 cysteine pairs are disulfide-bonded: Cys-59-Cys-78, Cys-66-Cys-82, and Cys-77-Cys-86.

This sequence belongs to the conotoxin O1 superfamily. Expressed by the venom duct.

The protein localises to the secreted. The chain is Conotoxin VnMKLT1-021 from Conus ventricosus (Mediterranean cone).